Here is a 63-residue protein sequence, read N- to C-terminus: Large ribosomal subunit protein uL29 (63 aa).

The protein belongs to the universal ribosomal protein uL29 family.

This Aeromonas salmonicida (strain A449) protein is Large ribosomal subunit protein uL29.